Here is a 225-residue protein sequence, read N- to C-terminus: Enolase-phosphatase E1 (225 aa).

The protein belongs to the HAD-like hydrolase superfamily. MasA/MtnC family. In terms of assembly, monomer. Mg(2+) serves as cofactor.

The enzyme catalyses 5-methylsulfanyl-2,3-dioxopentyl phosphate + H2O = 1,2-dihydroxy-5-(methylsulfanyl)pent-1-en-3-one + phosphate. It participates in amino-acid biosynthesis; L-methionine biosynthesis via salvage pathway; L-methionine from S-methyl-5-thio-alpha-D-ribose 1-phosphate: step 3/6. Its pathway is amino-acid biosynthesis; L-methionine biosynthesis via salvage pathway; L-methionine from S-methyl-5-thio-alpha-D-ribose 1-phosphate: step 4/6. Its function is as follows. Bifunctional enzyme that catalyzes the enolization of 2,3-diketo-5-methylthiopentyl-1-phosphate (DK-MTP-1-P) into the intermediate 2-hydroxy-3-keto-5-methylthiopentenyl-1-phosphate (HK-MTPenyl-1-P), which is then dephosphorylated to form the acireductone 1,2-dihydroxy-3-keto-5-methylthiopentene (DHK-MTPene). The polypeptide is Enolase-phosphatase E1 (Shewanella halifaxensis (strain HAW-EB4)).